The following is a 441-amino-acid chain: Maltose-6'-phosphate glucosidase (441 aa).

Position 4–70 (4–70) interacts with NAD(+); that stretch reads FSILIAGGGS…PQIKFSYSTN (67 aa). Residues Arg93 and Asn147 each contribute to the substrate site. Cys169 lines the Mn(2+) pocket. Asp170 functions as the Proton donor in the catalytic mechanism. His200 is a Mn(2+) binding site. Residue Tyr264 is the Proton acceptor of the active site. Arg284 contributes to the substrate binding site.

It belongs to the glycosyl hydrolase 4 family. In terms of assembly, homotetramer. The cofactor is NAD(+). Mn(2+) serves as cofactor. Requires Fe(2+) as cofactor. It depends on Co(2+) as a cofactor. Ni(2+) is required as a cofactor.

It carries out the reaction alpha-maltose 6'-phosphate + H2O = D-glucose 6-phosphate + D-glucose. It functions in the pathway glycan degradation; maltose degradation. In terms of biological role, hydrolyzes a wide variety of 6-phospho-alpha-D-glucosides including maltose-6'P, trehalose-6P and the 6'-phosphorylated derivatives of the five linkage-isomeric alpha-D-glucosyl-D-fructoses: trehalulose-6'P, turanose-6'P, maltulose-6'P, leucrose-6'P, and palatinose-6'P. However, sucrose-6P is not a substrate for MalH, and this enzyme also fails to hydrolyze beta-O-linked phosphorylated disaccharides such as cellobiose-6'P and gentobiose-6'P. The protein is Maltose-6'-phosphate glucosidase (malH) of Fusobacterium mortiferum.